The sequence spans 677 residues: DNA ligase (677 aa).

NAD(+)-binding positions include 34-38 (DLAFD), 83-84 (SL), and E115. The N6-AMP-lysine intermediate role is filled by K117. 4 residues coordinate NAD(+): R138, E180, K297, and K321. C416, C419, C434, and C439 together coordinate Zn(2+). In terms of domain architecture, BRCT spans 596–677 (KKTSQLAGLT…LIKMLETEQA (82 aa)).

This sequence belongs to the NAD-dependent DNA ligase family. LigA subfamily. Mg(2+) serves as cofactor. Requires Mn(2+) as cofactor.

The enzyme catalyses NAD(+) + (deoxyribonucleotide)n-3'-hydroxyl + 5'-phospho-(deoxyribonucleotide)m = (deoxyribonucleotide)n+m + AMP + beta-nicotinamide D-nucleotide.. DNA ligase that catalyzes the formation of phosphodiester linkages between 5'-phosphoryl and 3'-hydroxyl groups in double-stranded DNA using NAD as a coenzyme and as the energy source for the reaction. It is essential for DNA replication and repair of damaged DNA. The polypeptide is DNA ligase (Acidobacterium capsulatum (strain ATCC 51196 / DSM 11244 / BCRC 80197 / JCM 7670 / NBRC 15755 / NCIMB 13165 / 161)).